Here is a 629-residue protein sequence, read N- to C-terminus: MALWGGRFSQAADARFKSFNDSLRFDYRLAEQDITGSVAWSKALVSVGILTQDEQLTIEAALNDLKLAVLENPEQILQSDAEDIHSWVETQLIAKVGDLGKKLHTGRSRNDQVATDLKLWCKQQGQQLLMQLDKTQQQLVSLAREHQHTVLPGYTHLQRAQPVTFSHWCLAYVEMLERDFSRLTDCLKRLDTCPLGSGALAGTAYPMDRTELAHSLGFGSATLNSLDSVSDRDHVMELMCTASMSMIHLSRLAEDLIFYNSGESNFIELADAVTSGSSLMPQKKNPDALELIRGKTGRVFGSLSAMLMTLKALPLAYNKDMQEDKEGLFDALDTWSDCLEMAAMSLVGMKINEARTKEAALGGYSNATELADYLVAKGVPFRDSHHIVGEAVVAAIAKGVPLEALTLAEFKAFDVLIEDDVYHHLSLDETLAKRKALGGVSPVQVEFALTNAEKRLEERDTSGISIRAARLTDLDDIERMVNYWANIGENLPRSRSDLVKAVGTFAVTEKHNQVTGCASIYVYDTGLAELRSLGIEPGYQGGGQGKAVVEYMLRKAEQMAIQKVFVLTRVPEFFMKLGFRSTSKSMLPEKVLKDCDMCPRQHACDEVALEFKLNVVGQTINLKAEKLAS.

The interval 1-499 is argininosuccinate lyase; that stretch reads MALWGGRFSQ…NLPRSRSDLV (499 aa). Residues 464 to 598 form the N-acetyltransferase domain; sequence ISIRAARLTD…EKVLKDCDMC (135 aa). Residues 500 to 629 form an amino-acid acetyltransferase region; it reads KAVGTFAVTE…INLKAEKLAS (130 aa).

It in the N-terminal section; belongs to the lyase 1 family. Argininosuccinate lyase subfamily. This sequence in the C-terminal section; belongs to the acetyltransferase family. ArgA subfamily.

Its subcellular location is the cytoplasm. The enzyme catalyses 2-(N(omega)-L-arginino)succinate = fumarate + L-arginine. It carries out the reaction L-glutamate + acetyl-CoA = N-acetyl-L-glutamate + CoA + H(+). The protein operates within amino-acid biosynthesis; L-arginine biosynthesis; N(2)-acetyl-L-ornithine from L-glutamate: step 1/4. It participates in amino-acid biosynthesis; L-arginine biosynthesis; L-arginine from L-ornithine and carbamoyl phosphate: step 3/3. The chain is Bifunctional protein ArgHA (argHA) from Moritella abyssi.